Reading from the N-terminus, the 140-residue chain is Large ribosomal subunit protein uL11 (140 aa).

It belongs to the universal ribosomal protein uL11 family. In terms of assembly, part of the ribosomal stalk of the 50S ribosomal subunit. Interacts with L10 and the large rRNA to form the base of the stalk. L10 forms an elongated spine to which L12 dimers bind in a sequential fashion forming a multimeric L10(L12)X complex. One or more lysine residues are methylated.

Forms part of the ribosomal stalk which helps the ribosome interact with GTP-bound translation factors. The polypeptide is Large ribosomal subunit protein uL11 (Geotalea daltonii (strain DSM 22248 / JCM 15807 / FRC-32) (Geobacter daltonii)).